Reading from the N-terminus, the 154-residue chain is Aspartate carbamoyltransferase regulatory chain (154 aa).

The Zn(2+) site is built by cysteine 109, cysteine 114, cysteine 138, and cysteine 141.

This sequence belongs to the PyrI family. Contains catalytic and regulatory chains. Requires Zn(2+) as cofactor.

In terms of biological role, involved in allosteric regulation of aspartate carbamoyltransferase. The sequence is that of Aspartate carbamoyltransferase regulatory chain from Tolumonas auensis (strain DSM 9187 / NBRC 110442 / TA 4).